Consider the following 590-residue polypeptide: UvrABC system protein C (590 aa).

Positions 15 to 92 (DLPGCYMMKD…IQKHKPYYNI (78 aa)) constitute a GIY-YIG domain. The UVR domain occupies 197-232 (SKIKKELEQKMETASENLEFERAAEIRDQIHYVEMT).

The protein belongs to the UvrC family. Interacts with UvrB in an incision complex.

The protein resides in the cytoplasm. The UvrABC repair system catalyzes the recognition and processing of DNA lesions. UvrC both incises the 5' and 3' sides of the lesion. The N-terminal half is responsible for the 3' incision and the C-terminal half is responsible for the 5' incision. This chain is UvrABC system protein C, found in Ligilactobacillus salivarius (strain UCC118) (Lactobacillus salivarius).